Consider the following 110-residue polypeptide: uncharacterized protein (110 aa).

3 helical membrane passes run 4-26, 46-68, and 72-91; these read LVGGGLMIIAGILIKLFPPKSIN, ANRYSASLMILSGLVIAGMGLLL, and LFILQLILLIAACVITFMLT.

The protein localises to the cell membrane. This is an uncharacterized protein from Bacillus subtilis (strain 168).